Reading from the N-terminus, the 177-residue chain is Large ribosomal subunit protein uL6 (177 aa).

It belongs to the universal ribosomal protein uL6 family. In terms of assembly, part of the 50S ribosomal subunit.

Functionally, this protein binds to the 23S rRNA, and is important in its secondary structure. It is located near the subunit interface in the base of the L7/L12 stalk, and near the tRNA binding site of the peptidyltransferase center. The sequence is that of Large ribosomal subunit protein uL6 from Pseudomonas putida (strain W619).